A 258-amino-acid chain; its full sequence is Imidazole glycerol phosphate synthase subunit HisF (258 aa).

Catalysis depends on residues Asp-11 and Asp-130.

It belongs to the HisA/HisF family. As to quaternary structure, heterodimer of HisH and HisF.

It is found in the cytoplasm. It catalyses the reaction 5-[(5-phospho-1-deoxy-D-ribulos-1-ylimino)methylamino]-1-(5-phospho-beta-D-ribosyl)imidazole-4-carboxamide + L-glutamine = D-erythro-1-(imidazol-4-yl)glycerol 3-phosphate + 5-amino-1-(5-phospho-beta-D-ribosyl)imidazole-4-carboxamide + L-glutamate + H(+). It participates in amino-acid biosynthesis; L-histidine biosynthesis; L-histidine from 5-phospho-alpha-D-ribose 1-diphosphate: step 5/9. Functionally, IGPS catalyzes the conversion of PRFAR and glutamine to IGP, AICAR and glutamate. The HisF subunit catalyzes the cyclization activity that produces IGP and AICAR from PRFAR using the ammonia provided by the HisH subunit. The chain is Imidazole glycerol phosphate synthase subunit HisF from Lachnoclostridium phytofermentans (strain ATCC 700394 / DSM 18823 / ISDg) (Clostridium phytofermentans).